The following is a 252-amino-acid chain: tRNA (guanine-N(1)-)-methyltransferase (252 aa).

Residues Gly117 and 137-142 (IGDYVL) contribute to the S-adenosyl-L-methionine site.

It belongs to the RNA methyltransferase TrmD family. As to quaternary structure, homodimer.

The protein resides in the cytoplasm. It carries out the reaction guanosine(37) in tRNA + S-adenosyl-L-methionine = N(1)-methylguanosine(37) in tRNA + S-adenosyl-L-homocysteine + H(+). Functionally, specifically methylates guanosine-37 in various tRNAs. In Idiomarina loihiensis (strain ATCC BAA-735 / DSM 15497 / L2-TR), this protein is tRNA (guanine-N(1)-)-methyltransferase.